The primary structure comprises 238 residues: Fatty acid metabolism regulator protein (238 aa).

An HTH gntR-type domain is found at Lys-6–Phe-74. The segment at residues Glu-34–Gln-53 is a DNA-binding region (H-T-H motif).

As to quaternary structure, homodimer.

Its subcellular location is the cytoplasm. Its function is as follows. Multifunctional regulator of fatty acid metabolism. The chain is Fatty acid metabolism regulator protein from Shewanella baltica (strain OS223).